Reading from the N-terminus, the 476-residue chain is Glycogen synthase (476 aa).

Position 15 (Lys-15) interacts with ADP-alpha-D-glucose.

Belongs to the glycosyltransferase 1 family. Bacterial/plant glycogen synthase subfamily.

The enzyme catalyses [(1-&gt;4)-alpha-D-glucosyl](n) + ADP-alpha-D-glucose = [(1-&gt;4)-alpha-D-glucosyl](n+1) + ADP + H(+). It participates in glycan biosynthesis; glycogen biosynthesis. Functionally, synthesizes alpha-1,4-glucan chains using ADP-glucose. This is Glycogen synthase from Yersinia enterocolitica serotype O:8 / biotype 1B (strain NCTC 13174 / 8081).